Reading from the N-terminus, the 257-residue chain is UPF0246 protein ACICU_02469 (257 aa).

It belongs to the UPF0246 family.

This chain is UPF0246 protein ACICU_02469, found in Acinetobacter baumannii (strain ACICU).